The sequence spans 774 residues: Lon protease 1 (774 aa).

The 194-residue stretch at 9 to 202 folds into the Lon N-terminal domain; that stretch reads IPLLPLRGLL…KVIDFINNEK (194 aa). 354–361 provides a ligand contact to ATP; it reads GPPGVGKT. Positions 590–771 constitute a Lon proteolytic domain; the sequence is EDQVGVVTGL…DEVLEHALVG (182 aa). Catalysis depends on residues Ser-677 and Lys-720.

This sequence belongs to the peptidase S16 family. As to quaternary structure, homohexamer. Organized in a ring with a central cavity. Exists as a mixture of small oligomeric species in solution.

The protein localises to the cytoplasm. The enzyme catalyses Hydrolysis of proteins in presence of ATP.. ATP-dependent serine protease that mediates the selective degradation of mutant and abnormal proteins as well as certain short-lived regulatory proteins. Required for cellular homeostasis and for survival from DNA damage and developmental changes induced by stress. Degrades polypeptides processively to yield small peptide fragments that are 5 to 10 amino acids long. Binds to DNA in a double-stranded, site-specific manner. Has been implicated in preventing sigma(G) activity under non-sporulation conditions. The polypeptide is Lon protease 1 (Bacillus subtilis (strain 168)).